Here is a 419-residue protein sequence, read N- to C-terminus: Imidazolonepropionase (419 aa).

The Fe(3+) site is built by His84 and His86. His84 and His86 together coordinate Zn(2+). 4-imidazolone-5-propanoate is bound by residues Arg93, Tyr156, and His189. Tyr156 provides a ligand contact to N-formimidoyl-L-glutamate. Residue His254 coordinates Fe(3+). His254 serves as a coordination point for Zn(2+). 4-imidazolone-5-propanoate is bound at residue Gln257. Asp329 is a Fe(3+) binding site. A Zn(2+)-binding site is contributed by Asp329. Asn331 and Gly333 together coordinate N-formimidoyl-L-glutamate. Thr334 is a 4-imidazolone-5-propanoate binding site.

This sequence belongs to the metallo-dependent hydrolases superfamily. HutI family. As to quaternary structure, monomer. Forms a tightly packed homodimer in the crystal, but this seems to be an artifact of crystallization. Zn(2+) is required as a cofactor. It depends on Fe(3+) as a cofactor.

Its subcellular location is the cytoplasm. It catalyses the reaction 4-imidazolone-5-propanoate + H2O = N-formimidoyl-L-glutamate. It participates in amino-acid degradation; L-histidine degradation into L-glutamate; N-formimidoyl-L-glutamate from L-histidine: step 3/3. Its function is as follows. Catalyzes the hydrolytic cleavage of the carbon-nitrogen bond in imidazolone-5-propanoate to yield N-formimidoyl-L-glutamate. It is the third step in the universal histidine degradation pathway. The polypeptide is Imidazolonepropionase (Agrobacterium fabrum (strain C58 / ATCC 33970) (Agrobacterium tumefaciens (strain C58))).